The sequence spans 368 residues: Branched-chain-amino-acid aminotransferase (368 aa).

Residue arginine 101 coordinates pyridoxal 5'-phosphate. Lysine 204 carries the post-translational modification N6-(pyridoxal phosphate)lysine. Pyridoxal 5'-phosphate-binding positions include tyrosine 209 and 271–272 (IT). Lysine 299 participates in a covalent cross-link: Isoglutamyl lysine isopeptide (Lys-Gln) (interchain with Q-Cter in protein Pup). Position 314 (threonine 314) interacts with pyridoxal 5'-phosphate.

The protein belongs to the class-IV pyridoxal-phosphate-dependent aminotransferase family. Homodimer. It depends on pyridoxal 5'-phosphate as a cofactor.

The catalysed reaction is L-isoleucine + 2-oxoglutarate = (S)-3-methyl-2-oxopentanoate + L-glutamate. It catalyses the reaction L-valine + 2-oxoglutarate = 3-methyl-2-oxobutanoate + L-glutamate. The enzyme catalyses L-leucine + 2-oxoglutarate = 4-methyl-2-oxopentanoate + L-glutamate. It participates in amino-acid biosynthesis; L-isoleucine biosynthesis; L-isoleucine from 2-oxobutanoate: step 4/4. The protein operates within amino-acid biosynthesis; L-leucine biosynthesis; L-leucine from 3-methyl-2-oxobutanoate: step 4/4. It functions in the pathway amino-acid biosynthesis; L-valine biosynthesis; L-valine from pyruvate: step 4/4. Inhibited by ammonium sulfate at millimolar concentrations and by O-benzylhydroxylamine (Obe). In terms of biological role, catalyzes the reversible transfers of an amino group from glutamate to the alpha-ketoacid of the respective amino acid in the final step in the biosynthesis of branchedchain amino acids. The amino acids can be ranked in the following order with respect to their efficiency as amino donor: Leu &gt; Ile &gt; Val. This Mycolicibacterium smegmatis (strain ATCC 700084 / mc(2)155) (Mycobacterium smegmatis) protein is Branched-chain-amino-acid aminotransferase (ilvE).